Here is a 299-residue protein sequence, read N- to C-terminus: UTP--glucose-1-phosphate uridylyltransferase (299 aa).

Belongs to the UDPGP type 2 family.

The enzyme catalyses alpha-D-glucose 1-phosphate + UTP + H(+) = UDP-alpha-D-glucose + diphosphate. It participates in carbohydrate metabolism; nucleotide-sugar metabolism. It functions in the pathway capsule biogenesis; capsule polysaccharide biosynthesis. In Streptococcus pneumoniae serotype 4 (strain ATCC BAA-334 / TIGR4), this protein is UTP--glucose-1-phosphate uridylyltransferase (cap4C).